The following is an 87-amino-acid chain: MENDRGEIVDLYVPRKCSATGRIIKSKDHGSCQITIAKVDENGRAIQGENIIYALSGFVRAMGESDDSLNRLAQRDGLLKAVWNPQR.

The protein belongs to the eukaryotic ribosomal protein eS21 family. Component of the small ribosomal subunit (SSU). Mature N.crassa ribosomes consist of a small (40S) and a large (60S) subunit. The 40S small subunit contains 1 molecule of ribosomal RNA (18S rRNA) and at least 32 different proteins. The large 60S subunit contains 3 rRNA molecules (26S, 5.8S and 5S rRNA) and at least 42 different proteins.

Its subcellular location is the cytoplasm. Component of the ribosome, a large ribonucleoprotein complex responsible for the synthesis of proteins in the cell. The small ribosomal subunit (SSU) binds messenger RNAs (mRNAs) and translates the encoded message by selecting cognate aminoacyl-transfer RNA (tRNA) molecules. The large subunit (LSU) contains the ribosomal catalytic site termed the peptidyl transferase center (PTC), which catalyzes the formation of peptide bonds, thereby polymerizing the amino acids delivered by tRNAs into a polypeptide chain. The nascent polypeptides leave the ribosome through a tunnel in the LSU and interact with protein factors that function in enzymatic processing, targeting, and the membrane insertion of nascent chains at the exit of the ribosomal tunnel. The sequence is that of Small ribosomal subunit protein eS21 (crp-7) from Neurospora crassa (strain ATCC 24698 / 74-OR23-1A / CBS 708.71 / DSM 1257 / FGSC 987).